Reading from the N-terminus, the 144-residue chain is Large ribosomal subunit protein uL11 (144 aa).

The protein belongs to the universal ribosomal protein uL11 family. As to quaternary structure, part of the ribosomal stalk of the 50S ribosomal subunit. Interacts with L10 and the large rRNA to form the base of the stalk. L10 forms an elongated spine to which L12 dimers bind in a sequential fashion forming a multimeric L10(L12)X complex. Contacts the CTC protein (RL25). One or more lysine residues are methylated.

Forms part of the ribosomal stalk which helps the ribosome interact with GTP-bound translation factors. In Deinococcus radiodurans (strain ATCC 13939 / DSM 20539 / JCM 16871 / CCUG 27074 / LMG 4051 / NBRC 15346 / NCIMB 9279 / VKM B-1422 / R1), this protein is Large ribosomal subunit protein uL11.